The following is a 156-amino-acid chain: Ribosomal RNA large subunit methyltransferase H (156 aa).

S-adenosyl-L-methionine-binding positions include L72, G103, and 122-127; that span reads LSSLTL.

This sequence belongs to the RNA methyltransferase RlmH family. In terms of assembly, homodimer.

It localises to the cytoplasm. The enzyme catalyses pseudouridine(1915) in 23S rRNA + S-adenosyl-L-methionine = N(3)-methylpseudouridine(1915) in 23S rRNA + S-adenosyl-L-homocysteine + H(+). In terms of biological role, specifically methylates the pseudouridine at position 1915 (m3Psi1915) in 23S rRNA. The protein is Ribosomal RNA large subunit methyltransferase H of Dechloromonas aromatica (strain RCB).